We begin with the raw amino-acid sequence, 184 residues long: Probable DNA-directed RNA polymerase subunit delta (184 aa).

Positions 14 to 81 (LSMIEVARAI…GENVWALRSW (68 aa)) constitute an HTH HARE-type domain. Disordered regions lie at residues 88–107 (DEEV…KHHK) and 118–184 (GDDD…DEDD). Over residues 118-164 (GDDDIIDYDNDDPEDDDLDAATDDSDDDYSDDDSDYDEDNDDADDVL) the composition is skewed to acidic residues.

It belongs to the RpoE family. In terms of assembly, RNAP is composed of a core of 2 alpha, a beta and a beta' subunits. The core is associated with a delta subunit and one of several sigma factors.

In terms of biological role, participates in both the initiation and recycling phases of transcription. In the presence of the delta subunit, RNAP displays an increased specificity of transcription, a decreased affinity for nucleic acids, and an increased efficiency of RNA synthesis because of enhanced recycling. The polypeptide is Probable DNA-directed RNA polymerase subunit delta (Lactobacillus acidophilus (strain ATCC 700396 / NCK56 / N2 / NCFM)).